The sequence spans 187 residues: Plasmodium-specific hydrophobic abundant protein (187 aa).

Residues 1 to 18 form the signal peptide; sequence MMKYVFVALCLFAVVALA.

It to HAP-S protein.

Its subcellular location is the membrane. The chain is Plasmodium-specific hydrophobic abundant protein from Physarum polycephalum (Slime mold).